A 256-amino-acid polypeptide reads, in one-letter code: Hemin import ATP-binding protein HmuV (256 aa).

An ABC transporter domain is found at Ile2 to Asp238. Gly34 to Ser41 contributes to the ATP binding site.

This sequence belongs to the ABC transporter superfamily. Heme (hemin) importer (TC 3.A.1.14.5) family. As to quaternary structure, the complex is composed of two ATP-binding proteins (HmuV), two transmembrane proteins (HmuU) and a solute-binding protein (HmuT).

It is found in the cell inner membrane. Its function is as follows. Part of the ABC transporter complex HmuTUV involved in hemin import. Responsible for energy coupling to the transport system. The polypeptide is Hemin import ATP-binding protein HmuV (Shigella dysenteriae).